The chain runs to 242 residues: Ribonuclease PH (242 aa).

Phosphate is bound by residues Arg-90 and 128-130 (GTR).

The protein belongs to the RNase PH family. In terms of assembly, homohexameric ring arranged as a trimer of dimers.

The enzyme catalyses tRNA(n+1) + phosphate = tRNA(n) + a ribonucleoside 5'-diphosphate. Its function is as follows. Phosphorolytic 3'-5' exoribonuclease that plays an important role in tRNA 3'-end maturation. Removes nucleotide residues following the 3'-CCA terminus of tRNAs; can also add nucleotides to the ends of RNA molecules by using nucleoside diphosphates as substrates, but this may not be physiologically important. Probably plays a role in initiation of 16S rRNA degradation (leading to ribosome degradation) during starvation. This chain is Ribonuclease PH, found in Nocardioides sp. (strain ATCC BAA-499 / JS614).